A 601-amino-acid polypeptide reads, in one-letter code: MMSRKRQASSNDFFDMEQLLIANDALVHQNHSTPNHASDELSVNDPSPLSRGLQSDVNSNISRNISNTFFKKSIFFFVYYCKQALEFISTVFSIIKFLLNRRKVSFLLSFLLLFSLFLLIPNDGRVNIKFFYKDFVDRIPFRFIPSNFNISFGKHLEQAKSLFKSKFGNSSSTYNERDSIMPLLKLQSNLTEAKTLLYQNPISPEDVLLHFWDRNLMSTYDLKIQDINDSVNPLLNTYLDFIEKDIYLVSHLPVSEKHPGNIPISLVNKSVQAICSFAEHYNLLRNPSYRGFLRINNGESIFNLLCIEDLHESVNLDILCLKDILRNIAQSSKEAMYIVKRHNSSQSFYGNRSTTNFSIINSGLYLKKDAAKNLLAKQFDATYSYYHKDLEESVHQKLNSNLEKRVEKYIKHSCSQRNVADHPDFALKVVGAVVDYGWTFPKPKFSDILRDYWGKKANLPTALLDTSINSNWCNYEDTVQVSVRLNRPMYVRHISLIFPIHGDDSYFPREIQMFGLINDINYQILSNMNNLVLLATIPVSLSSVFEVNYYYLPKFSDTPGLLEEAYFNTFVFRAFSKNESLTSQICLYHIGIHGKEINEEF.

The next 3 helical transmembrane spans lie at 74–94, 104–124, and 531–551; these read IFFF…VFSI, VSFL…PNDG, and LVLL…NYYY.

It localises to the endoplasmic reticulum membrane. This is an uncharacterized protein from Schizosaccharomyces pombe (strain 972 / ATCC 24843) (Fission yeast).